The primary structure comprises 406 residues: MKNEVKKVVLAYSGGLDTSIILKWLQDEYNCEVVTFTADIGQGEELEPARKKALSLGIKEENIFIKDLRDEFVKDYVFPMFRANAIYEGEYLLGTSIARPLIAKTQAQIALQTGADAVSHGATGKGNDQVRFELGYLAFNPDLKIIAPWREWDLNSREKLLAYAQKHGIDISKKKGKSPYSMDANLLHISYEGLVLEDPAHAPEEDMWRWSKSPKDAPNESEIIELDFQKGDLVAINGEKLSPAGLLTKLNELGCKHGIGRLDIVENRYVGMKSRGCYETPGGTILLKAHRALESITLDREAAHLKDELMPKYASLIYNGYWFSPERMMLQALIDESQIHANGRVKLELYKGNVMVIGRESANDSLFNAAYCTFEEDEVYNQKDAAGFIKLNALRFIIAGKNGRKF.

ATP contacts are provided by residues alanine 11 to serine 19 and alanine 38. Residues tyrosine 91 and serine 96 each coordinate L-citrulline. An ATP-binding site is contributed by glycine 121. Residues threonine 123, asparagine 127, and aspartate 128 each contribute to the L-aspartate site. Asparagine 127 is an L-citrulline binding site. L-citrulline-binding residues include arginine 131, serine 181, serine 190, glutamate 266, and tyrosine 278.

The protein belongs to the argininosuccinate synthase family. Type 1 subfamily. In terms of assembly, homotetramer.

Its subcellular location is the cytoplasm. The catalysed reaction is L-citrulline + L-aspartate + ATP = 2-(N(omega)-L-arginino)succinate + AMP + diphosphate + H(+). The protein operates within amino-acid biosynthesis; L-arginine biosynthesis; L-arginine from L-ornithine and carbamoyl phosphate: step 2/3. The sequence is that of Argininosuccinate synthase from Campylobacter jejuni subsp. jejuni serotype O:23/36 (strain 81-176).